A 187-amino-acid polypeptide reads, in one-letter code: UPF0398 protein SH1465 (187 aa).

The protein belongs to the UPF0398 family.

This Staphylococcus haemolyticus (strain JCSC1435) protein is UPF0398 protein SH1465.